A 436-amino-acid chain; its full sequence is Histidine--tRNA ligase (436 aa).

It belongs to the class-II aminoacyl-tRNA synthetase family. Homodimer.

The protein localises to the cytoplasm. The enzyme catalyses tRNA(His) + L-histidine + ATP = L-histidyl-tRNA(His) + AMP + diphosphate + H(+). In Prochlorococcus marinus (strain MIT 9303), this protein is Histidine--tRNA ligase.